The following is a 182-amino-acid chain: UPF0397 protein SPT_0523 (182 aa).

5 helical membrane-spanning segments follow: residues 10-30 (VVAV…NIPT), 46-66 (LLSI…GHAI), 73-93 (YGLW…VGLF), 109-129 (ILIF…VLAP), and 148-168 (IVAG…LLLA).

This sequence belongs to the UPF0397 family.

The protein localises to the cell membrane. This Streptococcus pneumoniae (strain Taiwan19F-14) protein is UPF0397 protein SPT_0523.